A 718-amino-acid polypeptide reads, in one-letter code: Telomeric repeat-binding factor 2 (718 aa).

Disordered stretches follow at residues methionine 1–aspartate 22 and asparagine 219–glutamate 286. Composition is skewed to basic and acidic residues over residues alanine 8–aspartate 22 and asparagine 219–arginine 228. A TRFH dimerization region spans residues glutamate 24–serine 220. A run of 15 repeats spans residues glycine 257–alanine 269, glycine 270–threonine 282, glycine 283–valine 295, arginine 296–glutamine 308, glycine 309–methionine 321, glycine 322–leucine 334, glycine 335–valine 347, arginine 348–valine 360, glycine 361–alanine 373, arginine 374–proline 386, glycine 387–valine 399, arginine 400–valine 412, arginine 413–valine 425, arginine 426–alanine 438, and glycine 439–threonine 451. Positions glycine 257–threonine 451 are 15 X 13 AA approximate tandem repeats. 2 disordered regions span residues threonine 342–proline 455 and phenylalanine 524–glutamate 641. Residues alanine 405–valine 425 show a composition bias toward basic and acidic residues. Residues proline 533–serine 543 are compositionally biased toward polar residues. A Nuclear localization signal motif is present at residues arginine 545–lysine 550. Positions serine 584–serine 595 are enriched in low complexity. The span at proline 615–tyrosine 630 shows a compositional bias: polar residues. One can recognise an HTH myb-type domain in the interval lysine 664–isoleucine 717. The segment at residues tryptophan 688 to lysine 713 is a DNA-binding region (H-T-H motif).

Homodimer. Component of the shelterin complex (telosome). Interacts with TERF2IP/RAP1. In terms of tissue distribution, highly expressed in embryo.

The protein localises to the nucleus. It is found in the chromosome. The protein resides in the telomere. Functionally, binds the telomeric double-stranded 5'-TTAGGG-3' repeat and plays a central role in telomere maintenance and protection against end-to-end fusion of chromosomes. In addition to its telomeric DNA-binding role, required to recruit a number of factors and enzymes required for telomere protection, including the shelterin complex, TERF2IP/RAP1 and DCLRE1B/Apollo. Component of the shelterin complex (telosome) that is involved in the regulation of telomere length and protection. Shelterin associates with arrays of double-stranded 5'-TTAGGG-3' repeats added by telomerase and protects chromosome ends; without its protective activity, telomeres are no longer hidden from the DNA damage surveillance and chromosome ends are inappropriately processed by DNA repair pathways. Together with DCLRE1B/Apollo, plays a key role in telomeric loop (T loop) formation by generating 3' single-stranded overhang at the leading end telomeres: T loops have been proposed to protect chromosome ends from degradation and repair. Required both to recruit DCLRE1B/Apollo to telomeres and activate the exonuclease activity of DCLRE1B/Apollo. Together with DCLRE1B/Apollo, required to control the amount of DNA topoisomerase (TOP1, TOP2A and TOP2B) needed for telomere replication during fork passage and prevent aberrant telomere topology. Recruits TERF2IP/RAP1 to telomeres, thereby participating in to repressing homology-directed repair (HDR), which can affect telomere length. The protein is Telomeric repeat-binding factor 2 (TERF2) of Gallus gallus (Chicken).